Reading from the N-terminus, the 371-residue chain is 4-hydroxy-3-methylbut-2-en-1-yl diphosphate synthase (flavodoxin) (371 aa).

[4Fe-4S] cluster contacts are provided by Cys-270, Cys-273, Cys-305, and Glu-312.

This sequence belongs to the IspG family. [4Fe-4S] cluster serves as cofactor.

It catalyses the reaction (2E)-4-hydroxy-3-methylbut-2-enyl diphosphate + oxidized [flavodoxin] + H2O + 2 H(+) = 2-C-methyl-D-erythritol 2,4-cyclic diphosphate + reduced [flavodoxin]. Its pathway is isoprenoid biosynthesis; isopentenyl diphosphate biosynthesis via DXP pathway; isopentenyl diphosphate from 1-deoxy-D-xylulose 5-phosphate: step 5/6. Its function is as follows. Converts 2C-methyl-D-erythritol 2,4-cyclodiphosphate (ME-2,4cPP) into 1-hydroxy-2-methyl-2-(E)-butenyl 4-diphosphate. In Shewanella halifaxensis (strain HAW-EB4), this protein is 4-hydroxy-3-methylbut-2-en-1-yl diphosphate synthase (flavodoxin).